A 98-amino-acid chain; its full sequence is U-scoloptoxin(16)-Er9a (98 aa).

The signal sequence occupies residues 1-24 (MVSYLCMSVSSGWLSIGKIAIKDG).

This sequence belongs to the scoloptoxin-16 family. Post-translationally, contains 4 disulfide bonds. Expressed by the venom gland.

It is found in the secreted. This Ethmostigmus rubripes (Giant centipede) protein is U-scoloptoxin(16)-Er9a.